The following is a 314-amino-acid chain: Tetraacyldisaccharide 4'-kinase (314 aa).

61–68 (IVGGSGKT) is a binding site for ATP.

It belongs to the LpxK family.

The catalysed reaction is a lipid A disaccharide + ATP = a lipid IVA + ADP + H(+). Its pathway is glycolipid biosynthesis; lipid IV(A) biosynthesis; lipid IV(A) from (3R)-3-hydroxytetradecanoyl-[acyl-carrier-protein] and UDP-N-acetyl-alpha-D-glucosamine: step 6/6. Its function is as follows. Transfers the gamma-phosphate of ATP to the 4'-position of a tetraacyldisaccharide 1-phosphate intermediate (termed DS-1-P) to form tetraacyldisaccharide 1,4'-bis-phosphate (lipid IVA). This Aliarcobacter butzleri (strain RM4018) (Arcobacter butzleri) protein is Tetraacyldisaccharide 4'-kinase.